A 178-amino-acid polypeptide reads, in one-letter code: Large ribosomal subunit protein uL6 (178 aa).

It belongs to the universal ribosomal protein uL6 family. Part of the 50S ribosomal subunit.

In terms of biological role, this protein binds to the 23S rRNA, and is important in its secondary structure. It is located near the subunit interface in the base of the L7/L12 stalk, and near the tRNA binding site of the peptidyltransferase center. This chain is Large ribosomal subunit protein uL6, found in Helicobacter acinonychis (strain Sheeba).